A 131-amino-acid chain; its full sequence is Small ribosomal subunit protein uS8 (131 aa).

Belongs to the universal ribosomal protein uS8 family. In terms of assembly, part of the 30S ribosomal subunit. Contacts proteins S5 and S12.

Functionally, one of the primary rRNA binding proteins, it binds directly to 16S rRNA central domain where it helps coordinate assembly of the platform of the 30S subunit. The polypeptide is Small ribosomal subunit protein uS8 (Nitrosomonas eutropha (strain DSM 101675 / C91 / Nm57)).